The chain runs to 189 residues: Phosphoheptose isomerase (189 aa).

An SIS domain is found at 34–189; sequence LADSLAGGRK…CDLVEKRLFP (156 aa). 49–51 lines the substrate pocket; the sequence is NGG. Zn(2+) contacts are provided by His-58 and Glu-62. Residues Glu-62, 91-92, 117-119, Ser-122, and Gln-169 contribute to the substrate site; these read ND and STS. Zn(2+) is bound by residues Gln-169 and His-177.

This sequence belongs to the SIS family. GmhA subfamily. Homotetramer. Zn(2+) is required as a cofactor.

It localises to the cytoplasm. The enzyme catalyses 2 D-sedoheptulose 7-phosphate = D-glycero-alpha-D-manno-heptose 7-phosphate + D-glycero-beta-D-manno-heptose 7-phosphate. It participates in carbohydrate biosynthesis; D-glycero-D-manno-heptose 7-phosphate biosynthesis; D-glycero-alpha-D-manno-heptose 7-phosphate and D-glycero-beta-D-manno-heptose 7-phosphate from sedoheptulose 7-phosphate: step 1/1. Catalyzes the isomerization of sedoheptulose 7-phosphate in D-glycero-D-manno-heptose 7-phosphate. The sequence is that of Phosphoheptose isomerase from Geobacter sulfurreducens (strain ATCC 51573 / DSM 12127 / PCA).